The primary structure comprises 352 residues: Putative formin-like protein 15b (352 aa).

The FH2 domain occupies 1-350 (MTLFNFIKLF…KDAKEAEMEK (350 aa)).

Belongs to the formin-like family. Class-II subfamily.

The sequence is that of Putative formin-like protein 15b (FH15B) from Arabidopsis thaliana (Mouse-ear cress).